The chain runs to 279 residues: Phosphate import ATP-binding protein PstB 2 (279 aa).

In terms of domain architecture, ABC transporter spans 34 to 274 (FDIENLDLYY…PSDDRTRGYV (241 aa)). Residue 66-73 (GPSGCGKS) participates in ATP binding.

This sequence belongs to the ABC transporter superfamily. Phosphate importer (TC 3.A.1.7) family. The complex is composed of two ATP-binding proteins (PstB), two transmembrane proteins (PstC and PstA) and a solute-binding protein (PstS).

The protein localises to the cell inner membrane. The enzyme catalyses phosphate(out) + ATP + H2O = ADP + 2 phosphate(in) + H(+). In terms of biological role, part of the ABC transporter complex PstSACB involved in phosphate import. Responsible for energy coupling to the transport system. The protein is Phosphate import ATP-binding protein PstB 2 of Vibrio vulnificus (strain YJ016).